A 144-amino-acid chain; its full sequence is 3-hydroxyacyl-[acyl-carrier-protein] dehydratase FabZ (144 aa).

Histidine 48 is a catalytic residue.

It belongs to the thioester dehydratase family. FabZ subfamily.

Its subcellular location is the cytoplasm. It carries out the reaction a (3R)-hydroxyacyl-[ACP] = a (2E)-enoyl-[ACP] + H2O. In terms of biological role, involved in unsaturated fatty acids biosynthesis. Catalyzes the dehydration of short chain beta-hydroxyacyl-ACPs and long chain saturated and unsaturated beta-hydroxyacyl-ACPs. In Bacillus thuringiensis (strain Al Hakam), this protein is 3-hydroxyacyl-[acyl-carrier-protein] dehydratase FabZ.